The chain runs to 290 residues: uncharacterized protein (290 aa).

Disordered regions lie at residues 105 to 156 and 259 to 290; these read LKHK…KLTV and EGAQ…KSKK. The segment covering 114–130 has biased composition (polar residues); it reads KATQQARKRNFISSKSK. Composition is skewed to basic and acidic residues over residues 143–156 and 261–280; these read RESK…KLTV and AQRD…EPVL.

This is an uncharacterized protein from Homo sapiens (Human).